Reading from the N-terminus, the 195-residue chain is GTP-dependent dephospho-CoA kinase (195 aa).

The GTP site is built by Asp49, Val50, Asp68, Glu127, and Asp150.

This sequence belongs to the GTP-dependent DPCK family.

The catalysed reaction is 3'-dephospho-CoA + GTP = GDP + CoA + H(+). The protein operates within cofactor biosynthesis; coenzyme A biosynthesis. Functionally, catalyzes the GTP-dependent phosphorylation of the 3'-hydroxyl group of dephosphocoenzyme A to form coenzyme A (CoA). The protein is GTP-dependent dephospho-CoA kinase of Methanosarcina acetivorans (strain ATCC 35395 / DSM 2834 / JCM 12185 / C2A).